Reading from the N-terminus, the 32-residue chain is MSDIN-like toxin proprotein 3 (32 aa).

The propeptide occupies 1–10 (MSDINATRLP). Positions 11 to 17 (VWIGYSP) form a cross-link, cyclopeptide (Val-Pro). Residues 18-32 (CVGDDAVALLNRGEG) constitute a propeptide that is removed on maturation.

This sequence belongs to the MSDIN fungal toxin family. In terms of processing, processed by the macrocyclase-peptidase enzyme POPB to yield a toxic cyclic heptapeptide. POPB first removes 10 residues from the N-terminus. Conformational trapping of the remaining peptide forces the enzyme to release this intermediate rather than proceed to macrocyclization. The enzyme rebinds the remaining peptide in a different conformation and catalyzes macrocyclization of the N-terminal 7 residues.

In terms of biological role, probable toxin that belongs to the MSDIN-like toxin family responsible for a large number of food poisoning cases and deaths. In Amanita fuligineoides, this protein is MSDIN-like toxin proprotein 3.